Reading from the N-terminus, the 485-residue chain is Glutamyl-tRNA(Gln) amidotransferase subunit A (485 aa).

Residues lysine 79 and serine 154 each act as charge relay system in the active site. The active-site Acyl-ester intermediate is serine 178.

It belongs to the amidase family. GatA subfamily. As to quaternary structure, heterotrimer of A, B and C subunits.

It catalyses the reaction L-glutamyl-tRNA(Gln) + L-glutamine + ATP + H2O = L-glutaminyl-tRNA(Gln) + L-glutamate + ADP + phosphate + H(+). In terms of biological role, allows the formation of correctly charged Gln-tRNA(Gln) through the transamidation of misacylated Glu-tRNA(Gln) in organisms which lack glutaminyl-tRNA synthetase. The reaction takes place in the presence of glutamine and ATP through an activated gamma-phospho-Glu-tRNA(Gln). This is Glutamyl-tRNA(Gln) amidotransferase subunit A from Staphylococcus haemolyticus (strain JCSC1435).